The following is a 257-amino-acid chain: Major prion protein (257 aa).

The signal sequence occupies residues 1–24 (MVKSHIGGWILLLFVATWSDVGLC). Positions 25 to 234 (KKRPKPGGWN…ESEAYYQRGA (210 aa)) are interaction with GRB2, ERI3 and SYN1. The tract at residues 28 to 110 (PKPGGWNTGG…GQWGKPNKPK (83 aa)) is disordered. Gly residues-rich tracts occupy residues 33-48 (WNTG…GSPG) and 55-101 (QGGG…GSHG). 5 repeat units span residues 54–62 (PQGGGGWGQ), 63–70 (PHGGGWGQ), 71–78 (PHGGGWGQ), 79–86 (PHGGGWGQ), and 87–95 (PHGGGGWGQ). Residues 54-95 (PQGGGGWGQPHGGGWGQPHGGGWGQPHGGGWGQPHGGGGWGQ) form a 5 X 8 AA tandem repeats of P-H-G-G-G-W-G-Q region. Cu(2+) is bound by residues His-64, Gly-65, Gly-66, His-72, Gly-73, Gly-74, His-80, Gly-81, Gly-82, His-88, Gly-90, and Gly-91. Cys-183 and Cys-218 are joined by a disulfide. N-linked (GlcNAc...) asparagine glycosylation is found at Asn-185 and Asn-201. The GPI-anchor amidated alanine moiety is linked to residue Ala-234. Positions 235–257 (SAILFSPPPVILLISLLILLIVG) are cleaved as a propeptide — removed in mature form.

This sequence belongs to the prion family. Monomer and homodimer. Has a tendency to aggregate into amyloid fibrils containing a cross-beta spine, formed by a steric zipper of superposed beta-strands. Soluble oligomers may represent an intermediate stage on the path to fibril formation. Copper binding may promote oligomerization. Interacts with GRB2, APP, ERI3/PRNPIP and SYN1. Mislocalized cytosolically exposed PrP interacts with MGRN1; this interaction alters MGRN1 subcellular location and causes lysosomal enlargement. Interacts with KIAA1191.

It is found in the cell membrane. It localises to the golgi apparatus. Its primary physiological function is unclear. Has cytoprotective activity against internal or environmental stresses. May play a role in neuronal development and synaptic plasticity. May be required for neuronal myelin sheath maintenance. May play a role in iron uptake and iron homeostasis. Soluble oligomers are toxic to cultured neuroblastoma cells and induce apoptosis (in vitro). Association with GPC1 (via its heparan sulfate chains) targets PRNP to lipid rafts. Also provides Cu(2+) or Zn(2+) for the ascorbate-mediated GPC1 deaminase degradation of its heparan sulfate side chains. This chain is Major prion protein, found in Vulpes lagopus (Arctic fox).